We begin with the raw amino-acid sequence, 145 residues long: AP-2 complex subunit sigma (145 aa).

It belongs to the adaptor complexes small subunit family. As to quaternary structure, adaptor protein complex 2 (AP-2) is a heterotetramer composed of two large adaptins (alpha-type subunit apl3 and beta-type subunit apl1), a medium chain (mu-type subunit apm4) and a small adaptin (sigma-type subunit aps2).

It localises to the cell membrane. It is found in the membrane. The protein resides in the coated pit. Component of the adaptor complexes which link clathrin to receptors in coated vesicles. Clathrin-associated protein complexes are believed to interact with the cytoplasmic tails of membrane proteins, leading to their selection and concentration. In Aspergillus fumigatus (strain ATCC MYA-4609 / CBS 101355 / FGSC A1100 / Af293) (Neosartorya fumigata), this protein is AP-2 complex subunit sigma (aps2).